We begin with the raw amino-acid sequence, 135 residues long: Small ribosomal subunit protein bS18 (135 aa).

The interval 1-65 is disordered; that stretch reads MARPDMGGPK…GDEGGGRRGF (65 aa). Gly residues predominate over residues 9-41; the sequence is PKMGGGFGGPRSGGFGGGGGGGGFGGGGFGGGR. Basic and acidic residues predominate over residues 42-61; it reads GGDRGDRGDRDDRGGDEGGG.

This sequence belongs to the bacterial ribosomal protein bS18 family. Part of the 30S ribosomal subunit. Forms a tight heterodimer with protein bS6.

Functionally, binds as a heterodimer with protein bS6 to the central domain of the 16S rRNA, where it helps stabilize the platform of the 30S subunit. The sequence is that of Small ribosomal subunit protein bS18 from Anaeromyxobacter dehalogenans (strain 2CP-C).